The chain runs to 438 residues: tRNA-2-methylthio-N(6)-dimethylallyladenosine synthase (438 aa).

Residues 4–120 enclose the MTTase N-terminal domain; the sequence is KKLYIDTVGC…VPEMVKDAEA (117 aa). [4Fe-4S] cluster is bound by residues cysteine 13, cysteine 49, cysteine 83, cysteine 158, cysteine 162, and cysteine 165. The region spanning 144-377 is the Radical SAM core domain; it reads GRKRVSAFVT…QAVHSRIHNE (234 aa). One can recognise a TRAM domain in the interval 377 to 438; sequence ETYVGSTQQV…YANSLLGELL (62 aa).

It belongs to the methylthiotransferase family. MiaB subfamily. In terms of assembly, monomer. [4Fe-4S] cluster serves as cofactor.

The protein resides in the cytoplasm. The enzyme catalyses N(6)-dimethylallyladenosine(37) in tRNA + (sulfur carrier)-SH + AH2 + 2 S-adenosyl-L-methionine = 2-methylsulfanyl-N(6)-dimethylallyladenosine(37) in tRNA + (sulfur carrier)-H + 5'-deoxyadenosine + L-methionine + A + S-adenosyl-L-homocysteine + 2 H(+). Functionally, catalyzes the methylthiolation of N6-(dimethylallyl)adenosine (i(6)A), leading to the formation of 2-methylthio-N6-(dimethylallyl)adenosine (ms(2)i(6)A) at position 37 in tRNAs that read codons beginning with uridine. The polypeptide is tRNA-2-methylthio-N(6)-dimethylallyladenosine synthase (Trichlorobacter lovleyi (strain ATCC BAA-1151 / DSM 17278 / SZ) (Geobacter lovleyi)).